The sequence spans 127 residues: Trefoil factor 2 (127 aa).

An N-terminal signal peptide occupies residues 1–21; that stretch reads EPQRPAPGHPPPAGAVCLTGA. The residue at position 22 (Gln22) is a Pyrrolidone carboxylic acid. P-type domains lie at 27–71 and 77–120; these read CRCS…FKPL and EECV…FFPM. Cystine bridges form between Cys27/Cys125, Cys29/Cys56, Cys40/Cys55, Cys50/Cys67, Cys79/Cys105, Cys89/Cys104, and Cys99/Cys116.

Found in pancreas.

The protein localises to the secreted. Functionally, inhibits gastrointestinal motility and gastric acid secretion. Could function as a structural component of gastric mucus, possibly by stabilizing glycoproteins in the mucus gel through interactions with carbohydrate side chains. The protein is Trefoil factor 2 (TFF2) of Sus scrofa (Pig).